Here is a 141-residue protein sequence, read N- to C-terminus: Heavy metal-associated isoprenylated plant protein 29 (141 aa).

Positions 1 to 59 (MEVPMDCPGCENKVRKALEKMNGVHDVQIDIKQQRVTVTGSAEQKKVLKVARNVTKRDI) constitute an HMA domain. 2 residues coordinate a metal cation: cysteine 7 and cysteine 10. Cysteine 138 carries the cysteine methyl ester modification. The S-farnesyl cysteine moiety is linked to residue cysteine 138. Positions 139-141 (SIM) are cleaved as a propeptide — removed in mature form.

It belongs to the HIPP family.

Its function is as follows. Heavy-metal-binding protein. This is Heavy metal-associated isoprenylated plant protein 29 from Arabidopsis thaliana (Mouse-ear cress).